Reading from the N-terminus, the 159-residue chain is Phosphopantetheine adenylyltransferase (159 aa).

S9 lines the substrate pocket. ATP contacts are provided by residues 9 to 10 (SF) and H17. K41, L73, and K87 together coordinate substrate. ATP is bound by residues 88-90 (GLR), E98, and 123-129 (YGYLSSS).

The protein belongs to the bacterial CoaD family. As to quaternary structure, homohexamer. Requires Mg(2+) as cofactor.

It is found in the cytoplasm. It catalyses the reaction (R)-4'-phosphopantetheine + ATP + H(+) = 3'-dephospho-CoA + diphosphate. It functions in the pathway cofactor biosynthesis; coenzyme A biosynthesis; CoA from (R)-pantothenate: step 4/5. Reversibly transfers an adenylyl group from ATP to 4'-phosphopantetheine, yielding dephospho-CoA (dPCoA) and pyrophosphate. This is Phosphopantetheine adenylyltransferase from Thermoanaerobacter pseudethanolicus (strain ATCC 33223 / 39E) (Clostridium thermohydrosulfuricum).